A 465-amino-acid chain; its full sequence is MSTPLIAGTGPSAVRQLISNAVQNDPVSGNFRCRRDIFTDAALFDYEMKYIFEQNWVFLAHESQVANPDDYLVSNIGRQPVIITRNKAGDVSAVINACSHRGAELCRRKQGNRSTFTCQFHGWTFSNTGKLLKVKDGQDDNYPEGFNVDGSHDLTRIPSFANYRGFLFGSMNPDACPIEEHLGGSKAILDQVIDQTPGELEVLRGSSSYIYDGNWKLQIENGADGYHVGSVHWNYVATIGRRDRTSDTIRTVDVTTWSKKNIGGTYTFEHGHMLLWTRLPNPEVRPVFARREELKARVGEEVADAIVNQTRNLCIYPNLYVMDQISTQIRVVRPISVDKTEVTIYCFAPRDESEEVRNARIRQYEDFFNVSGMGTPDDLEEFRACQSGYRGSAREWNDLSRGAPHWISGPDDNARRLGLAPLMSGARMEDEGLFVQQHTYWAETMLRGIEAEPKVFNVQPVEVAQ.

Residues 56–154 (WVFLAHESQV…GFNVDGSHDL (99 aa)) enclose the Rieske domain. Residues Cys-98, His-100, Cys-118, and His-121 each contribute to the [2Fe-2S] cluster site. Fe cation-binding residues include His-227 and His-232.

This sequence belongs to the bacterial ring-hydroxylating dioxygenase alpha subunit family. In terms of assembly, heterohexamer of 3 large (CbdA) subunits and 3 small (CbdB) subunits. The heterohexamer is part of 2-halobenzoate dioxygenase two component enzyme system. The other component is a NADH:acceptor reductase (CdbC). [2Fe-2S] cluster is required as a cofactor. Fe(2+) serves as cofactor.

It carries out the reaction a 2-halobenzoate + NADH + O2 + H(+) = a halide anion + catechol + CO2 + NAD(+). The protein operates within xenobiotic degradation; benzoate degradation via CoA ligation. Functionally, component of 2-halobenzoate dioxygenase multicomponent enzyme system which catalyzes the incorporation of both atoms of molecular oxygen into 2-halobenzoate to form catechol. In Burkholderia cepacia (Pseudomonas cepacia), this protein is 2-halobenzoate 1,2-dioxygenase large subunit (cbdA).